Here is a 732-residue protein sequence, read N- to C-terminus: Serine/threonine-protein kinase CBK1 (732 aa).

Residues Ser-111–Thr-240 form a disordered region. A compositionally biased stretch (polar residues) spans Asp-119–Gln-159. Over residues Asn-160–Leu-171 the composition is skewed to low complexity. Residues Pro-172 to Val-183 show a composition bias toward polar residues. The span at Gln-185–Gln-221 shows a compositional bias: low complexity. The segment covering Ser-222–Thr-240 has biased composition (polar residues). Positions His-281 to Arg-310 form a coiled coil. The 313-residue stretch at Phe-335–Phe-647 folds into the Protein kinase domain. Residues Ile-341–Val-349 and Lys-364 each bind ATP. Asp-458 acts as the Proton acceptor in catalysis. In terms of domain architecture, AGC-kinase C-terminal spans Arg-648–Asn-730.

The protein belongs to the protein kinase superfamily. STE Ser/Thr protein kinase family. COT1 subfamily. Interacts with MOB2 and BCR1.

Its subcellular location is the bud neck. The protein localises to the cell tip. The catalysed reaction is L-seryl-[protein] + ATP = O-phospho-L-seryl-[protein] + ADP + H(+). The enzyme catalyses L-threonyl-[protein] + ATP = O-phospho-L-threonyl-[protein] + ADP + H(+). Its function is as follows. Serine/threonine-protein kinase required for wild-type hyphal growth and transcriptional regulation of cell-wall-associated genes. Involved in the biofilm formation through phosphorylation of the master regulator of biofilm formation BCR1. This is Serine/threonine-protein kinase CBK1 (CBK1) from Candida albicans (strain SC5314 / ATCC MYA-2876) (Yeast).